Here is a 1074-residue protein sequence, read N- to C-terminus: MSHYHRQGGPGQPHDSYEDQQQPYYTDQAHSGYDHHSYHQQQLYHAAYDAAQPEYQAAPVKPQRQPSRIRSNSSGSRSVSHTPAAYTNQGIPPVPSNLSAARQRSDPSQALPPSSSSYAQDAFSRPSYSSHRNAPNAPNSNHPSRWDPNASYDTAPTAPLYDPAPLPGSGQLDADPSQHSIDLGVREPLYDDQVMQQHYPYGGAAAFQRSDSYQSGRPGAGGYHSIDDEKSIHSKHSNQPPGAWNAGAPSMPYNNMPTSHSTIQMAQPAYPPSPYGEYEMHATGMPEPNMSIAGLGAPGALIAAAPMPGMQHHDSTYSRENRERIMRKRTVKRIPLQDGNLVLDIPVASSISKSTTNNPEFREMRYQACTSDPDRFIEEKYTLRPWLYGRETEMAIVLTCYNEDDVLFARTMGGVIKNIAHLCSRTRSKTWGPDAWKKVVVIIVADGRKKANERMLKALGLMGCYNEGVMKDHVLKKPVEAHIFEYTTRVQITEKGEVKVTPCPIQVVFCLKEQNKKKLNSHRWYFNAFCQMLKPNVCILLDVGTKPTGTSIYELWKSFDKHHRVGGACGEICVDTGRGCTALFNPLVASQNFEYKMSNILDKPTESVFGFISVLPGAFSAYRYKALLGRPLEMYFKGEKLHSGEGSNSIFEGNMYLAEDRILCFELVTKEREGWLLRYVKSAKAYTDVPDRVPEFISQRRRWLNGSLFASYYAVWHWYRIFTSGQPFLRKLWLLFQVIYNLVLLVFSWFGIANFFLAFYFLLSASTSTEGSDPFGGQGAAIVEIFQNIFIAMVIVVLVCSLGNRPQGSNFAYTSAIIIFALIMGLALYAAGYTIYLALDAAGLTHTNGWRVDNLETLFKTSGFRDIVISLAATYVMWLLCSLLHLEPWHMLTSFVQYLFLTPTYVIILSMYSMCNTNDLSWGTKQSNGPATDLGGATGCNSKQDGKGEMVDVKIPTSAADAEELWTHYRQTLSQPTVEVKQKRDKATRQEDHAKNFRTNLVLIWMCTNALVVIIFTSTWWNKYVRNHIYAGAVRRGEPVINPYQSAIFWSTAGLSAVRFVGSITFLLLRLFGH.

Disordered regions lie at residues 1 to 32 (MSHY…AHSG), 56 to 179 (QAAP…PSQH), and 209 to 255 (RSDS…PYNN). Polar residues predominate over residues 19–29 (DQQQPYYTDQA). Residues 68-80 (RIRSNSSGSRSVS) are compositionally biased toward low complexity. Residues Asn-72 and Asn-97 are each glycosylated (N-linked (GlcNAc...) asparagine). Over residues 85 to 119 (AYTNQGIPPVPSNLSAARQRSDPSQALPPSSSSYA) the composition is skewed to polar residues. Positions 129 to 143 (SSHRNAPNAPNSNHP) are enriched in low complexity. N-linked (GlcNAc...) asparagine glycosylation occurs at Asn-149. The N-linked (GlcNAc...) asparagine glycan is linked to Asn-289. The next 8 membrane-spanning stretches (helical) occupy residues 608–628 (VFGF…KALL), 742–762 (LVLL…FYFL), 779–799 (GAAI…VVLV), 817–837 (IIIF…TIYL), 867–887 (IVIS…LHLE), 891–911 (MLTS…ILSM), 1001–1021 (LVLI…STWW), and 1048–1068 (IFWS…TFLL).

It belongs to the chitin synthase family. Class II subfamily.

It localises to the cell membrane. The protein localises to the cytoplasmic vesicle membrane. The catalysed reaction is [(1-&gt;4)-N-acetyl-beta-D-glucosaminyl](n) + UDP-N-acetyl-alpha-D-glucosamine = [(1-&gt;4)-N-acetyl-beta-D-glucosaminyl](n+1) + UDP + H(+). Polymerizes chitin, a structural polymer of the cell wall and septum, by transferring the sugar moiety of UDP-GlcNAc to the non-reducing end of the growing chitin polymer. The chain is Chitin synthase 2 (CHS2) from Mycosarcoma maydis (Corn smut fungus).